A 738-amino-acid polypeptide reads, in one-letter code: uncharacterized protein (738 aa).

The first 27 residues, 1–27, serve as a signal peptide directing secretion; sequence MKKLLTSLMLSTASFMLLLTVSNKAYA. A run of 2 helical transmembrane segments spans residues 612–632 and 712–732; these read TFHTVTVSIVASPPGFYILNS and ITYALIIGLSAIALLATTVTI.

It localises to the membrane. This is an uncharacterized protein from Mycoplasma (Bacteriophage L2).